Consider the following 185-residue polypeptide: Large ribosomal subunit protein eL19 (185 aa).

The disordered stretch occupies residues 152 to 185; the sequence is SDKLTSQQEARRAKNTASRAKRNEKAQIVAKVDV.

It belongs to the eukaryotic ribosomal protein eL19 family.

The sequence is that of Large ribosomal subunit protein eL19 (RPL19) from Tetrahymena thermophila (strain SB210).